The following is a 359-amino-acid chain: Peptide chain release factor 1 (359 aa).

Q233 carries the N5-methylglutamine modification.

It belongs to the prokaryotic/mitochondrial release factor family. Methylated by PrmC. Methylation increases the termination efficiency of RF1.

It localises to the cytoplasm. Functionally, peptide chain release factor 1 directs the termination of translation in response to the peptide chain termination codons UAG and UAA. This Cytophaga hutchinsonii (strain ATCC 33406 / DSM 1761 / CIP 103989 / NBRC 15051 / NCIMB 9469 / D465) protein is Peptide chain release factor 1.